A 986-amino-acid chain; its full sequence is DNA polymerase I (986 aa).

The 5'-3' exonuclease domain maps to 1–303; sequence MFMSAKSPLL…RTFIDKIQAF (303 aa). The region spanning 304–592 is the 3'-5' exonuclease domain; sequence HRNFSDNQSP…MEDRGIRIDC (289 aa). A disordered region spans residues 308 to 327; it reads SDNQSPVPMGNEADNGEPKK. Residues 593-986 are polymerase; sequence DYLQTLSQQL…HRGSNWMEAK (394 aa).

The protein belongs to the DNA polymerase type-A family. As to quaternary structure, single-chain monomer with multiple functions.

The enzyme catalyses DNA(n) + a 2'-deoxyribonucleoside 5'-triphosphate = DNA(n+1) + diphosphate. In addition to polymerase activity, this DNA polymerase exhibits 3'-5' and 5'-3' exonuclease activity. This chain is DNA polymerase I (polA), found in Synechocystis sp. (strain ATCC 27184 / PCC 6803 / Kazusa).